Here is a 501-residue protein sequence, read N- to C-terminus: UDP-N-acetylmuramoyl-L-alanyl-D-glutamate--2,6-diaminopimelate ligase (501 aa).

Residues leucine 26, serine 28, and histidine 43 to cysteine 45 contribute to the UDP-N-acetyl-alpha-D-muramoyl-L-alanyl-D-glutamate site. Glycine 123–threonine 129 provides a ligand contact to ATP. UDP-N-acetyl-alpha-D-muramoyl-L-alanyl-D-glutamate contacts are provided by residues asparagine 164, threonine 165–threonine 166, serine 192, glutamine 198, and arginine 200. An N6-carboxylysine modification is found at lysine 232. Meso-2,6-diaminopimelate contacts are provided by residues arginine 398, aspartate 422 to arginine 425, glycine 473, and glutamate 477. The Meso-diaminopimelate recognition motif motif lies at aspartate 422–arginine 425.

This sequence belongs to the MurCDEF family. MurE subfamily. The cofactor is Mg(2+). Post-translationally, carboxylation is probably crucial for Mg(2+) binding and, consequently, for the gamma-phosphate positioning of ATP.

It localises to the cytoplasm. It catalyses the reaction UDP-N-acetyl-alpha-D-muramoyl-L-alanyl-D-glutamate + meso-2,6-diaminopimelate + ATP = UDP-N-acetyl-alpha-D-muramoyl-L-alanyl-gamma-D-glutamyl-meso-2,6-diaminopimelate + ADP + phosphate + H(+). It functions in the pathway cell wall biogenesis; peptidoglycan biosynthesis. In terms of biological role, catalyzes the addition of meso-diaminopimelic acid to the nucleotide precursor UDP-N-acetylmuramoyl-L-alanyl-D-glutamate (UMAG) in the biosynthesis of bacterial cell-wall peptidoglycan. This is UDP-N-acetylmuramoyl-L-alanyl-D-glutamate--2,6-diaminopimelate ligase from Haemophilus ducreyi (strain 35000HP / ATCC 700724).